The chain runs to 364 residues: UDP-N-acetylenolpyruvoylglucosamine reductase (364 aa).

An FAD-binding PCMH-type domain is found at 30 to 196 (LGGPATRLIT…LRVRFELEDA (167 aa)). R173 is a catalytic residue. The active-site Proton donor is the S252. The active site involves E356.

This sequence belongs to the MurB family. Requires FAD as cofactor.

The protein resides in the cytoplasm. It catalyses the reaction UDP-N-acetyl-alpha-D-muramate + NADP(+) = UDP-N-acetyl-3-O-(1-carboxyvinyl)-alpha-D-glucosamine + NADPH + H(+). It participates in cell wall biogenesis; peptidoglycan biosynthesis. In terms of biological role, cell wall formation. The polypeptide is UDP-N-acetylenolpyruvoylglucosamine reductase (Streptomyces avermitilis (strain ATCC 31267 / DSM 46492 / JCM 5070 / NBRC 14893 / NCIMB 12804 / NRRL 8165 / MA-4680)).